Reading from the N-terminus, the 153-residue chain is UPF0178 protein CC_1215 (153 aa).

It belongs to the UPF0178 family.

The polypeptide is UPF0178 protein CC_1215 (Caulobacter vibrioides (strain ATCC 19089 / CIP 103742 / CB 15) (Caulobacter crescentus)).